The primary structure comprises 310 residues: MGFAPVTPAAVETYDPDVDHDDESNGLDGFRVRSKRSGKFSGGYSDSPREVGDGYGVRSRARSNMKMYGGFKSEFDSDHDSGSGFGLKRKYNGNPKVSADFDADSDDEIVLVPKATRLRTHGKPSSGDFSHGSGGGFPLKSFGDRNFASHGFKPKNFSKPEPNFSQDLDYDDEFDDDRAEREGFNPRIQSSRSSSRVNGYSRKDGSYPRNTGASNGYGSSSRFKHEQMNAAAEVESDPIDEVVSSVKMLTEMFVRVENSKMEMMREMEKSRMEMELKHCQMMLESQQQIIGAFAEALSEKKSTNARRPVS.

The segment at 1 to 58 is disordered; sequence MGFAPVTPAAVETYDPDVDHDDESNGLDGFRVRSKRSGKFSGGYSDSPREVGDGYGVR. Residues 14–25 are compositionally biased toward acidic residues; it reads YDPDVDHDDESN. Phosphoserine is present on residues Ser77 and Ser105. Disordered stretches follow at residues 115-135, 152-171, and 177-221; these read ATRLRTHGKPSSGDFSHGSGG, FKPKNFSKPEPNFSQDLDYD, and DRAE…GSSS. Residues 208-221 are compositionally biased toward polar residues; the sequence is PRNTGASNGYGSSS.

As to quaternary structure, interacts with FRI. Interacts with WAV3.

This Arabidopsis thaliana (Mouse-ear cress) protein is Protein FIP2.